Reading from the N-terminus, the 153-residue chain is 3-dehydroquinate dehydratase (153 aa).

Y26 (proton acceptor) is an active-site residue. 3 residues coordinate substrate: N77, H83, and D90. The active-site Proton donor is H103. Substrate contacts are provided by residues 104–105 (LS) and R114.

It belongs to the type-II 3-dehydroquinase family. As to quaternary structure, homododecamer.

The catalysed reaction is 3-dehydroquinate = 3-dehydroshikimate + H2O. It functions in the pathway metabolic intermediate biosynthesis; chorismate biosynthesis; chorismate from D-erythrose 4-phosphate and phosphoenolpyruvate: step 3/7. Catalyzes a trans-dehydration via an enolate intermediate. This is 3-dehydroquinate dehydratase from Colwellia psychrerythraea (strain 34H / ATCC BAA-681) (Vibrio psychroerythus).